Consider the following 468-residue polypeptide: ERO1-like protein alpha (468 aa).

Residues 1–23 (MGRRWGFLIGFLVAVGLLGLGHG) form the signal peptide. Intrachain disulfides connect Cys-35/Cys-48, Cys-37/Cys-46, Cys-85/Cys-391, Cys-94/Cys-99, Cys-94/Cys-131, Cys-99/Cys-104, Cys-208/Cys-241, and Cys-394/Cys-397. Residues Ser-106, Ser-143, and Ser-145 each carry the phosphoserine modification. Residues Arg-187, Thr-189, and Trp-200 each contribute to the FAD site. FAD is bound by residues Ser-252 and His-255. N-linked (GlcNAc...) asparagine glycosylation occurs at Asn-280. Residues Arg-287 and Arg-300 each coordinate FAD. N-linked (GlcNAc...) asparagine glycosylation occurs at Asn-384.

The protein belongs to the EROs family. As to quaternary structure, predominantly monomer. May function both as a monomer and a homodimer. Interacts with PDILT. Interacts with ERP44; the interaction results in retention of ERO1A in the endoplasmic reticulum. It depends on FAD as a cofactor. Post-translationally, the Cys-94/Cys-99 and Cys-394/Cys-397 disulfide bonds constitute the redox-active center. The Cys-94/Cys-99 disulfide bond may accept electron from P4HB and funnel them to the active site disulfide Cys-394/Cys-397. The regulatory Cys-99/Cys-104 disulfide bond stabilizes the other regulatory bond Cys-94/Cys-131. In terms of processing, phosphorylated on Ser-145 by FAM20C in the Golgi which increases its enzymatic activity. Phosphorylation is induced by lactation. It is also induced by hypoxia and reductive stress.

The protein localises to the endoplasmic reticulum membrane. Its subcellular location is the golgi apparatus lumen. The protein resides in the secreted. It localises to the cell projection. It is found in the dendrite. Its activity is regulated as follows. Enzyme activity is tightly regulated to prevent the accumulation of reactive oxygen species in the endoplasmic reticulum. Reversibly down-regulated by the formation of disulfide bonds between the active site Cys-94 and Cys-131, and between Cys-99 and Cys-104. Glutathione may be required to regulate its activity in the endoplasmic reticulum. Functionally, oxidoreductase involved in disulfide bond formation in the endoplasmic reticulum. Efficiently reoxidizes P4HB/PDI, the enzyme catalyzing protein disulfide formation, in order to allow P4HB to sustain additional rounds of disulfide formation. Following P4HB reoxidation, passes its electrons to molecular oxygen via FAD, leading to the production of reactive oxygen species (ROS) in the cell. Required for the proper folding of immunoglobulins. Plays an important role in ER stress-induced, CHOP-dependent apoptosis by activating the inositol 1,4,5-trisphosphate receptor IP3R1. This Bos taurus (Bovine) protein is ERO1-like protein alpha.